A 486-amino-acid polypeptide reads, in one-letter code: N-succinylglutamate 5-semialdehyde dehydrogenase (486 aa).

NAD(+) is bound at residue 220-225; sequence GSSRTG. Residues E243 and C277 contribute to the active site.

The protein belongs to the aldehyde dehydrogenase family. AstD subfamily.

The catalysed reaction is N-succinyl-L-glutamate 5-semialdehyde + NAD(+) + H2O = N-succinyl-L-glutamate + NADH + 2 H(+). It participates in amino-acid degradation; L-arginine degradation via AST pathway; L-glutamate and succinate from L-arginine: step 4/5. Its function is as follows. Catalyzes the NAD-dependent reduction of succinylglutamate semialdehyde into succinylglutamate. The protein is N-succinylglutamate 5-semialdehyde dehydrogenase of Shewanella halifaxensis (strain HAW-EB4).